The following is a 218-amino-acid chain: Oxaloacetate decarboxylase, mitochondrial (218 aa).

The transit peptide at 1–18 (MNKFWETGRKIVAVGRNY) directs the protein to the mitochondrion. Glu-63, Glu-65, and Asp-94 together coordinate Mg(2+).

The protein belongs to the FAH family. In terms of assembly, homodimer. The cofactor is Mg(2+). Mn(2+) serves as cofactor.

The protein resides in the mitochondrion. It localises to the cytoplasm. It is found in the cytosol. It carries out the reaction a 3-acylpyruvate + H2O = a carboxylate + pyruvate + H(+). The catalysed reaction is acetylpyruvate + H2O = acetate + pyruvate + H(+). The enzyme catalyses 3-fumarylpyruvate + H2O = fumarate + pyruvate + H(+). It catalyses the reaction oxaloacetate + H(+) = pyruvate + CO2. Its function is as follows. Mitochondrial protein that acts as an oxaloacetate decarboxylase (ODx), catalyzing the decarboxylation of oxaloacetate (OAA) to pyruvate and CO(2), and as such is likely a regulatory enzyme in the TCA cycle. Also displays acylpyruvase activity, being able to hydrolyze acetylpyruvate and fumarylpyruvate in vitro. In Dictyostelium discoideum (Social amoeba), this protein is Oxaloacetate decarboxylase, mitochondrial (fahd1).